The sequence spans 841 residues: DNA ligase (841 aa).

NAD(+)-binding positions include 33 to 37 (DAQYD), 82 to 83 (SL), and E114. Catalysis depends on K116, which acts as the N6-AMP-lysine intermediate. NAD(+)-binding residues include R137, E174, K300, and K324. Zn(2+)-binding residues include C418, C421, C436, and C442. The BRCT domain occupies 758–841 (EKTGPLDGQT…AFLGEHGQQR (84 aa)).

The protein belongs to the NAD-dependent DNA ligase family. LigA subfamily. It depends on Mg(2+) as a cofactor. Mn(2+) serves as cofactor.

It carries out the reaction NAD(+) + (deoxyribonucleotide)n-3'-hydroxyl + 5'-phospho-(deoxyribonucleotide)m = (deoxyribonucleotide)n+m + AMP + beta-nicotinamide D-nucleotide.. Its function is as follows. DNA ligase that catalyzes the formation of phosphodiester linkages between 5'-phosphoryl and 3'-hydroxyl groups in double-stranded DNA using NAD as a coenzyme and as the energy source for the reaction. It is essential for DNA replication and repair of damaged DNA. The polypeptide is DNA ligase (Xanthomonas oryzae pv. oryzae (strain MAFF 311018)).